The sequence spans 1180 residues: MNLCAQYLRQAEALKADMTDSKLGAAEVWTSRQALQDLYQKMLVTDLEYALDKKVEQDLWNHAFKNQITTLQSQAKNRANPNRSEVQANLSLFLEAASGFYTQLLQELCTVFNVDLPCRVKSSQLGIISNKQSSTSAIVKPQPSSCSYICQHCLVHLGDIARYRNQTSQAESYYRHAAQLVPSNGQPYNQLAILASSKGDHLTTIFYYCRSIAVKFPFPAASTNLQKALSKALESRDEVKTKWSVSDFIKAFIKFHGHVYLCKSLDKLNTLREKLEEQFQRLILQKAFSSQQLVHITVINLFELHHLRDLSNEADEHSYSSDEQISWIQLLGLFMSFLGVMLSRALLNKNREEIMGECPLPAIKVSLDWLRLRPTVFNESAMDKRQYIWPWLVSILNSFQPKEEDVSNASVIPLPEEFELQGFLALRPALRMLDFSKGHQGIVIGKESLLIHARHQRLISLGKWVADNQPRLIQCRMSDGLVLFITDIPEIVVEEPQEKDTPVLQESSNGEQTPNESTHGLKSVLSAGKNQNSGLDGSERPVVTFKENIKPREQSREQNRNQNQRDTGKDRAGFNKGNGVQGKNEQKKEGKRKSEVKKNSHDKTTDAGKQVKTQTELRKTPVSEARKTPVTQTQTTCSSQFIPIHHPGAFPPLPSRPGFPPPAYVIPPPVAFSMSPGFTFPTGVSVPAPFLQTASHPQSANPVQTGKPSHIPYSQQRPSGPVALNQGPPQPQQTQPPPPQTSQQALQQSVQLQLQQQQQQQQQQQQQQQQSPTKQSSQLGKSPPHHHSMQQSYMQVPEQPGQMWNQHQNQPGMQKMPMQMPVKQPFFMPTQDPMKLFEHPMSMQPQQPSMDKKMKFPEVKVQDFYWDPPYHMAGEGRSTMADRMGKRQPGVFCSDQENMPRGPPYEDNKSSPLLPPDLLKTLADFEEEEELLFTKPHDFYQALAGPLNSAPGRNMFLPNQSRLDSGADVIGQSSLLPRFSIQDNSYQNNSIFSEAYGKNMTPSSKPDAPMMHQEPSLYSLFEGNPWSPSLPASSDHSTPASQSPHSSNPSSLPSSPPTHSHGSMPFSNFGPIGTPDSRDRRANDRWKAEKTGVSGFGLDYLPSASTSSVPETNSWHQGAPTSTWAAQDMPMEDSSTVLLDSFKSIWSSSMMQPGPSALEQLLMQQKQKQQRGHGNMNPPH.

TPR repeat units lie at residues 151-184 and 186-218; these read QHCL…VPSN and QPYN…KFPF. Disordered stretches follow at residues 496–636, 692–795, 893–913, 1019–1127, and 1148–1180; these read PQEK…TQTT, QTAS…SYMQ, CSDQ…SSPL, SLFE…WAAQ, and SSMM…NPPH. Residues 504–520 are compositionally biased toward polar residues; sequence LQESSNGEQTPNESTHG. Composition is skewed to basic and acidic residues over residues 547 to 559, 584 to 606, and 615 to 627; these read ENIK…REQN, NEQK…KTTD, and TELR…EARK. Positions 692-718 are enriched in polar residues; the sequence is QTASHPQSANPVQTGKPSHIPYSQQRP. A compositionally biased stretch (pro residues) spans 728-740; sequence PPQPQQTQPPPPQ. Residues 741-778 are compositionally biased toward low complexity; that stretch reads TSQQALQQSVQLQLQQQQQQQQQQQQQQQQSPTKQSSQ. Positions 1026–1038 are enriched in polar residues; sequence WSPSLPASSDHST. The segment covering 1039–1065 has biased composition (low complexity); it reads PASQSPHSSNPSSLPSSPPTHSHGSMP. A compositionally biased stretch (basic and acidic residues) spans 1076 to 1090; the sequence is DSRDRRANDRWKAEK. Residues 1103–1125 are compositionally biased toward polar residues; it reads SASTSSVPETNSWHQGAPTSTWA.

The protein resides in the cytoplasm. The protein localises to the nucleus. Functionally, plays a role in nonsense-mediated mRNA decay. Recruits UPF1 to cytoplasmic mRNA decay bodies. Together with SMG5 is thought to provide a link to the mRNA degradation machinery involving exonucleolytic pathways, and to serve as an adapter for UPF1 to protein phosphatase 2A (PP2A), thereby triggering UPF1 dephosphorylation. Required for normal embryonic development. The chain is Nonsense-mediated mRNA decay factor SMG7 from Danio rerio (Zebrafish).